Consider the following 153-residue polypeptide: SsrA-binding protein (153 aa).

Over residues 132 to 142 (ALKRKEAEREA) the composition is skewed to basic and acidic residues. The interval 132–153 (ALKRKEAEREAQSAMKRYAKGY) is disordered.

Belongs to the SmpB family.

It localises to the cytoplasm. In terms of biological role, required for rescue of stalled ribosomes mediated by trans-translation. Binds to transfer-messenger RNA (tmRNA), required for stable association of tmRNA with ribosomes. tmRNA and SmpB together mimic tRNA shape, replacing the anticodon stem-loop with SmpB. tmRNA is encoded by the ssrA gene; the 2 termini fold to resemble tRNA(Ala) and it encodes a 'tag peptide', a short internal open reading frame. During trans-translation Ala-aminoacylated tmRNA acts like a tRNA, entering the A-site of stalled ribosomes, displacing the stalled mRNA. The ribosome then switches to translate the ORF on the tmRNA; the nascent peptide is terminated with the 'tag peptide' encoded by the tmRNA and targeted for degradation. The ribosome is freed to recommence translation, which seems to be the essential function of trans-translation. The protein is SsrA-binding protein of Campylobacter hominis (strain ATCC BAA-381 / DSM 21671 / CCUG 45161 / LMG 19568 / NCTC 13146 / CH001A).